A 344-amino-acid chain; its full sequence is Probable dual-specificity RNA methyltransferase RlmN (344 aa).

The active-site Proton acceptor is E92. The region spanning 98–325 (DEDRATLCVS…TTIRASRGED (228 aa)) is the Radical SAM core domain. Residues C105 and C330 are joined by a disulfide bond. 3 residues coordinate [4Fe-4S] cluster: C112, C116, and C119. S-adenosyl-L-methionine is bound by residues 157–158 (GE), S189, 211–213 (SLH), and H287. Catalysis depends on C330, which acts as the S-methylcysteine intermediate.

The protein belongs to the radical SAM superfamily. RlmN family. Requires [4Fe-4S] cluster as cofactor.

It localises to the cytoplasm. It catalyses the reaction adenosine(2503) in 23S rRNA + 2 reduced [2Fe-2S]-[ferredoxin] + 2 S-adenosyl-L-methionine = 2-methyladenosine(2503) in 23S rRNA + 5'-deoxyadenosine + L-methionine + 2 oxidized [2Fe-2S]-[ferredoxin] + S-adenosyl-L-homocysteine. The catalysed reaction is adenosine(37) in tRNA + 2 reduced [2Fe-2S]-[ferredoxin] + 2 S-adenosyl-L-methionine = 2-methyladenosine(37) in tRNA + 5'-deoxyadenosine + L-methionine + 2 oxidized [2Fe-2S]-[ferredoxin] + S-adenosyl-L-homocysteine. Its function is as follows. Specifically methylates position 2 of adenine 2503 in 23S rRNA and position 2 of adenine 37 in tRNAs. This is Probable dual-specificity RNA methyltransferase RlmN from Bacteroides fragilis (strain YCH46).